The primary structure comprises 222 residues: MTPQTEQELLQRAQAIAGLRFAELAQSLHMPVPPDLKRDKGWVGMLIETALGATAGSKAEQDFAHLGIELKTLPINAQGMPLETTFVSLAPLTQNVGVSWENSHVRHKLSKVLWILVEGERQIPLSERRVGQPILWQPSAQQELRLKRDWEELMEYISLGKLEQINATLGEVLQLRPKGANSKALTRGIGKHGEMIDTLPLGFYLRKTFTAEILQQFLLGTG.

This sequence belongs to the MutH family.

It localises to the cytoplasm. In terms of biological role, sequence-specific endonuclease that cleaves unmethylated GATC sequences. It is involved in DNA mismatch repair. This chain is DNA mismatch repair protein MutH, found in Pasteurella multocida (strain Pm70).